The sequence spans 365 residues: Chorismate synthase (365 aa).

Arginine 47 contacts NADP(+). Residues 124–126, glycine 287, 302–306, and arginine 328 contribute to the FMN site; these read RAS and KPTAT.

This sequence belongs to the chorismate synthase family. In terms of assembly, homotetramer. FMNH2 serves as cofactor.

The catalysed reaction is 5-O-(1-carboxyvinyl)-3-phosphoshikimate = chorismate + phosphate. It participates in metabolic intermediate biosynthesis; chorismate biosynthesis; chorismate from D-erythrose 4-phosphate and phosphoenolpyruvate: step 7/7. Catalyzes the anti-1,4-elimination of the C-3 phosphate and the C-6 proR hydrogen from 5-enolpyruvylshikimate-3-phosphate (EPSP) to yield chorismate, which is the branch point compound that serves as the starting substrate for the three terminal pathways of aromatic amino acid biosynthesis. This reaction introduces a second double bond into the aromatic ring system. This Prochlorococcus marinus (strain MIT 9312) protein is Chorismate synthase.